We begin with the raw amino-acid sequence, 613 residues long: DNA mismatch repair protein MutL (613 aa).

This sequence belongs to the DNA mismatch repair MutL/HexB family.

This protein is involved in the repair of mismatches in DNA. It is required for dam-dependent methyl-directed DNA mismatch repair. May act as a 'molecular matchmaker', a protein that promotes the formation of a stable complex between two or more DNA-binding proteins in an ATP-dependent manner without itself being part of a final effector complex. This chain is DNA mismatch repair protein MutL, found in Bradyrhizobium sp. (strain ORS 278).